The sequence spans 275 residues: Transcription factor Ovo-like 2 (275 aa).

Residues 15–101 (SVRSWDELPD…GHLATKQRPV (87 aa)) are disordered. 2 stretches are compositionally biased toward basic and acidic residues: residues 18 to 29 (SWDELPDEKRAD) and 39 to 49 (LLHDPPEDCRS). Positions 56–76 (GSGSSSAGEPGGAESSSSPHA) are enriched in low complexity. Over residues 80-89 (ETPEPGDAEG) the composition is skewed to acidic residues. 4 C2H2-type zinc fingers span residues 119–141 (HSCDLCGKGFRLQRMLNRHLKCH), 147–169 (HLCTFCGKGFNDTFDLKRHVRTH), 175–198 (YKCNVCNKAFTQRCSLESHLKKIH), and 214–237 (YVCEDCGYTGPTQEDLYLHVNSAH). Serine 269 bears the Phosphoserine mark.

Belongs to the krueppel C2H2-type zinc-finger protein family. In terms of assembly, interacts (via zinc-finger domains) with CEBPA (via bZIP domain); the interaction inhibits the transcription factor activity of CEBPA and is required to repress adipogenesis. As to expression, expressed in testis, ovary, heart and skeletal muscle. Expressed in the cornea, but absent from the corneal endothelium.

The protein localises to the nucleus. In terms of biological role, zinc-finger transcription repressor factor. Plays a critical role in maintaining the identity of epithelial lineages by suppressing epithelial-to mesenchymal transition (EMT) mainly through the repression of ZEB1, an EMT inducer. Positively regulates neuronal differentiation. Suppresses cell cycling and terminal differentiation of keratinocytes by directly repressing MYC and NOTCH1. Important for the correct development of primordial germ cells in embryos. Plays dual functions in thermogenesis and adipogenesis to maintain energy balance. Essential for brown/beige adipose tissue-mediated thermogenesis, is necessary for the development of brown adipocytes. In white adipose tissues, limits adipogenesis by blocking CEBPA binding to its transcriptional targets and inhibiting its transcription factor activity. This chain is Transcription factor Ovo-like 2, found in Homo sapiens (Human).